The primary structure comprises 89 residues: Small ribosomal subunit protein uS15 (89 aa).

It belongs to the universal ribosomal protein uS15 family. In terms of assembly, part of the 30S ribosomal subunit. Forms a bridge to the 50S subunit in the 70S ribosome, contacting the 23S rRNA.

Functionally, one of the primary rRNA binding proteins, it binds directly to 16S rRNA where it helps nucleate assembly of the platform of the 30S subunit by binding and bridging several RNA helices of the 16S rRNA. In terms of biological role, forms an intersubunit bridge (bridge B4) with the 23S rRNA of the 50S subunit in the ribosome. This chain is Small ribosomal subunit protein uS15, found in Klebsiella pneumoniae subsp. pneumoniae (strain ATCC 700721 / MGH 78578).